Reading from the N-terminus, the 79-residue chain is MSRLGIMVLTLLLLVFIVTSHQDAGEKQATQRNAINFRWRRSFTRRAATEECEEYCEDEEKTCCGLEDGEPVCATTCLG.

The N-terminal stretch at 1–20 (MSRLGIMVLTLLLLVFIVTS) is a signal peptide. Positions 21–44 (HQDAGEKQATQRNAINFRWRRSFT) are excised as a propeptide. 3 disulfide bridges follow: Cys-52-Cys-64, Cys-56-Cys-73, and Cys-63-Cys-77. At Leu-78 the chain carries Leucine amide.

This sequence belongs to the conotoxin O3 superfamily. As to expression, expressed by the venom duct.

Its subcellular location is the secreted. The polypeptide is Conotoxin ArMSGL-0121 (Conus arenatus (Sand-dusted cone)).